A 315-amino-acid chain; its full sequence is Acetyl-coenzyme A carboxylase carboxyl transferase subunit alpha (315 aa).

The CoA carboxyltransferase C-terminal domain occupies 39–293 (RLQDKSSTLT…RGELASQLAM (255 aa)).

The protein belongs to the AccA family. Acetyl-CoA carboxylase is a heterohexamer composed of biotin carboxyl carrier protein (AccB), biotin carboxylase (AccC) and two subunits each of ACCase subunit alpha (AccA) and ACCase subunit beta (AccD).

The protein localises to the cytoplasm. The catalysed reaction is N(6)-carboxybiotinyl-L-lysyl-[protein] + acetyl-CoA = N(6)-biotinyl-L-lysyl-[protein] + malonyl-CoA. It functions in the pathway lipid metabolism; malonyl-CoA biosynthesis; malonyl-CoA from acetyl-CoA: step 1/1. Its function is as follows. Component of the acetyl coenzyme A carboxylase (ACC) complex. First, biotin carboxylase catalyzes the carboxylation of biotin on its carrier protein (BCCP) and then the CO(2) group is transferred by the carboxyltransferase to acetyl-CoA to form malonyl-CoA. This Pseudomonas fluorescens (strain SBW25) protein is Acetyl-coenzyme A carboxylase carboxyl transferase subunit alpha.